The primary structure comprises 543 residues: Splicing factor U2af large subunit B (543 aa).

Residues 1-10 show a composition bias toward gly residues; sequence MADDNGGGGD. The tract at residues 1–171 is disordered; the sequence is MADDNGGGGD…IPTPSQLPGS (171 aa). Basic and acidic residues-rich tracts occupy residues 17-78 and 88-114; these read VRPE…DRDR and EHRD…ERDG. Basic residues predominate over residues 115–126; that stretch reads HRRHRSRSRSRS. RRM domains are found at residues 207–290, 327–405, and 446–532; these read RRVY…RPTD, DRIF…RANQ, and QVVT…YPEN.

It belongs to the splicing factor SR family.

The protein resides in the nucleus. Functionally, necessary for the splicing of pre-mRNA. The polypeptide is Splicing factor U2af large subunit B (U2AF65B) (Triticum aestivum (Wheat)).